Here is a 12345-residue protein sequence, read N- to C-terminus: Muscle-specific protein 300 kDa (12345 aa).

Disordered stretches follow at residues M1–T68 and W121–N152. Residues M1–R12295 are Cytoplasmic-facing. Positions A19–G28 are enriched in gly residues. The span at E45–Q60 shows a compositional bias: basic and acidic residues. The LRR 1 repeat unit spans residues F249 to T273. Disordered stretches follow at residues E295–D325, T387–I488, and G504–A526. A compositionally biased stretch (low complexity) spans S299–P321. 2 stretches are compositionally biased toward polar residues: residues T387–Q404 and T414–P434. The span at T462–S484 shows a compositional bias: low complexity. Acidic residues predominate over residues N511–D520. Calponin-homology (CH) domains are found at residues R630–Q737 and Q777–P882. An LRR 2 repeat occupies L823–S847. Residues S919–Q952 form a TPR 1 repeat. LRR repeat units follow at residues C1089–E1112, H1389–W1411, and L1616–R1642. A TPR 2 repeat occupies L1603–V1636. An HAT 1 repeat occupies T1903–D1935. LRR repeat units lie at residues K2087–A2109 and Q2558–A2581. In terms of domain architecture, Calponin-homology (CH) 3 spans A2109–A2233. The stretch at A2663–L2696 is one TPR 3 repeat. The segment at A2699–L2724 is disordered. The span at P2704 to L2724 shows a compositional bias: basic and acidic residues. LRR repeat units lie at residues K2728–P2751, C2935–L2959, and S3030–C3053. Positions E2894–L2962 form a coiled coil. Residues L3110–I3207 form a Spectrin 1 repeat. One copy of the TPR 4 repeat lies at K3346–H3379. LRR repeat units lie at residues K3370–L3393, L3437–K3462, L3530–N3556, and N3611–K3634. The Spectrin 2 repeat unit spans residues K3539–A3633. Residues K3629–E3662 form a TPR 5 repeat. One copy of the HAT 2 repeat lies at K3706 to S3739. The stretch at L3748–A3771 is one LRR 15 repeat. A Spectrin 3 repeat occupies S4177–K4273. Residues E4360–Q4393 form a TPR 6 repeat. One copy of the HAT 3 repeat lies at A4371–R4403. A Spectrin 4 repeat occupies F4611–Y4701. LRR repeat units follow at residues N4654 to K4676 and E4742 to E4763. The stretch at E4799–Q4830 is one HAT 4 repeat. A Spectrin 5 repeat occupies H4820–Q4919. The LRR 18 repeat unit spans residues D4839–A4863. The HAT 5 repeat unit spans residues A4894 to D4926. LRR repeat units lie at residues Q5266 to V5289 and S5333 to H5357. A TPR 7 repeat occupies S5645–Y5678. LRR repeat units follow at residues S5761 to R5784, P5820 to G5843, and T5979 to H6002. A Spectrin 6 repeat occupies E5791–A5895. The HAT 6 repeat unit spans residues S6088 to K6120. Spectrin repeat units follow at residues R6321–K6405 and A6424–E6530. Coiled-coil stretches lie at residues M6356–L6397 and R6454–K6484. An LRR 24 repeat occupies Y6363–L6387. The TPR 8 repeat unit spans residues V6522 to I6555. 2 LRR repeats span residues S6531–P6554 and L6560–E6587. A coiled-coil region spans residues L6567–A6597. Positions E6631 to E6657 are disordered. The stretch at V6660–H6695 is one TPR 9 repeat. The LRR 27 repeat unit spans residues S7004–R7026. A TPR 10 repeat occupies E7161–K7195. LRR repeat units lie at residues L7219–R7242, K7300–P7318, E7319–A7339, and H7340–F7361. Residues K7419–M7457 adopt a coiled-coil conformation. Residues S7524–R7547 form an LRR 32 repeat. The stretch at T7644–R7676 is one HAT 7 repeat. The stretch at K7654 to V7687 is one TPR 11 repeat. LRR repeat units lie at residues Q7692–Q7714, Q7752–N7777, and L7816–F7840. Residues E7759–K7792 form a TPR 12 repeat. Residues T7799–E7935 are a coiled coil. One copy of the TPR 13 repeat lies at S7878 to Y7911. 4 LRR repeats span residues K8178–Q8201, E8238–N8264, E8298–E8321, and D8354–G8377. The TPR 14 repeat unit spans residues Q8431 to W8464. One copy of the LRR 40 repeat lies at E8534 to I8557. 6 disordered regions span residues I8583 to I8616, Q8966 to P9023, E9131 to A9158, G9361 to D9459, L9502 to S9735, and T9769 to L9797. Over residues S8601–M8611 the composition is skewed to polar residues. Low complexity predominate over residues T8982–E9011. Basic and acidic residues predominate over residues S9136–E9151. Basic residues predominate over residues K9394 to D9404. Acidic residues predominate over residues E9410 to P9419. The span at E9420–E9439 shows a compositional bias: low complexity. Residues D9440–I9451 are compositionally biased toward basic and acidic residues. Polar residues-rich tracts occupy residues A9544–L9563, I9587–S9597, and E9605–K9625. The segment covering T9658–P9680 has biased composition (low complexity). Residues E9681–T9698 show a composition bias toward basic and acidic residues. The LRR 41 repeat unit spans residues S9699–P9721. The span at M9711 to S9735 shows a compositional bias: polar residues. Basic residues predominate over residues K9777 to K9788. LRR repeat units lie at residues S9995–V10019, E10073–L10096, K10252–Q10276, and R10353–D10376. Coiled coils occupy residues S10072–Q10099 and L10172–I10257. A TPR 15 repeat occupies Q10231–L10264. The stretch at I10426–K10458 is one HAT 8 repeat. 3 LRR repeats span residues E10512–D10535, E10570–L10593, and A10644–Q10667. The TPR 16 repeat unit spans residues V10854–V10888. The HAT 9 repeat unit spans residues V10855–A10887. 2 LRR repeats span residues D10907–L10929 and A11021–S11043. Positions L11016 to A11046 form a coiled coil. The HAT 10 repeat unit spans residues D11070–S11104. The TPR 17 repeat unit spans residues F11072–F11105. An LRR 51 repeat occupies E11197–A11222. 2 coiled-coil regions span residues L11220–H11247 and L11281–L11308. LRR repeat units lie at residues S11342–T11365, L11398–D11422, E11670–S11692, P11697–R11720, and E11744–Q11766. The stretch at K11655–I11685 forms a coiled coil. The stretch at L11776–R11806 forms a coiled coil. One copy of the HAT 11 repeat lies at K11804 to T11836. LRR repeat units follow at residues D11959–H11981 and S12198–K12220. The segment at S12253 to A12272 is disordered. Residues A12256–T12267 are compositionally biased toward low complexity. The region spanning A12287–T12345 is the KASH domain. The helical; Anchor for type IV membrane protein transmembrane segment at A12296 to H12316 threads the bilayer. The stretch at Q12301–M12323 is one LRR 59 repeat. The Perinuclear space portion of the chain corresponds to G12317–T12345.

It belongs to the nesprin family. Core component of LINC complexes which are composed of inner nuclear membrane SUN domain-containing proteins coupled to outer nuclear membrane KASH domain-containing nesprins. Interacts with klar; this interaction allows the anchoring of the Msp300 nuclear ring structure to the nuclear envelope. Interacts with sls; this interaction mediates the recruitment of Msp300 to the Z-disks.

It localises to the nucleus membrane. Its subcellular location is the cytoplasm. The protein resides in the myofibril. The protein localises to the sarcomere. It is found in the z line. It localises to the cytoskeleton. Its subcellular location is the microtubule organizing center. The protein resides in the perinuclear region. Its function is as follows. Component of the LINC (LInker of Nucleoskeleton and Cytoskeleton) complex involved in the connection between the nuclear lamina and the cytoskeleton. Collaborates with Klar to promote even spacing of the myonuclei at the periphery of striated muscle fibers by mediating a tight association between a nuclear ring structure of Msp300 and the plus ends of a unique astral MT network. In addition, is essential for anchoring nuclei, mitochondria and endoplasmic reticulum (ER) structures to the Z-disks. In fat body cells, part of perinuclear non-centrosomal microtubule-organizing centers (ncMTOCs) which function to accommodate the organization of microtubule (MT) networks to control nuclear positioning and dynein motor-based retrograde endosomal trafficking. Functions as the primary organizer of the ncMTOC by recruiting Patronin, shot and msps to the organizing centre. Within the ncMTOC, Msp300 and shot anchors the ncMTOC at the nuclear surface and recruits the MT minus-end regulators Patronin and Nin for assembly, anchoring and/or stabilization of circumferential and radial MTs at the ncMTOCs. Patronin, and perhaps Nin, recruits msps to the ncMTOC for the gamma-tubulin-independent elongation of radial MTs. This Drosophila melanogaster (Fruit fly) protein is Muscle-specific protein 300 kDa.